The sequence spans 353 residues: Heat-inducible transcription repressor HrcA (353 aa).

It belongs to the HrcA family.

In terms of biological role, negative regulator of class I heat shock genes (grpE-dnaK-dnaJ and groELS operons). Prevents heat-shock induction of these operons. The polypeptide is Heat-inducible transcription repressor HrcA (Anaeromyxobacter dehalogenans (strain 2CP-1 / ATCC BAA-258)).